The primary structure comprises 298 residues: Protein DR_1172 (298 aa).

LEA-like repeat units follow at residues 48-117 (DAAQ…NVGQ), 128-197 (DQAK…DVAQ), and 201-270 (QGAQ…AGKQ). The segment covering 174–193 (VQDVKADASKAADQAKDKAQ) has biased composition (basic and acidic residues). A disordered region spans residues 174–298 (VQDVKADASK…MTGNTNTRKN (125 aa)). Low complexity predominate over residues 194–208 (DVAQNVKQGAQQAAS). A compositionally biased stretch (basic and acidic residues) spans 209 to 233 (DAKDKVQDVKADASRAADQAKDKAQ). Positions 275–298 (GSTTNNAGTAGNTGMTGNTNTRKN) are enriched in low complexity.

It belongs to the LEA type 1 family.

This Deinococcus radiodurans (strain ATCC 13939 / DSM 20539 / JCM 16871 / CCUG 27074 / LMG 4051 / NBRC 15346 / NCIMB 9279 / VKM B-1422 / R1) protein is Protein DR_1172.